A 550-amino-acid chain; its full sequence is CTP synthase (550 aa).

The amidoligase domain stretch occupies residues 1-277 (MNGSADAGPR…GRAVERALGL (277 aa)). Ser23 lines the CTP pocket. Ser23 contributes to the UTP binding site. 24–29 (SLGKGI) provides a ligand contact to ATP. Tyr64 contacts L-glutamine. Asp81 lines the ATP pocket. The Mg(2+) site is built by Asp81 and Glu151. CTP is bound by residues 158 to 160 (DIE), 198 to 203 (KTKPTQ), and Lys234. Residues 198–203 (KTKPTQ) and Lys234 each bind UTP. One can recognise a Glutamine amidotransferase type-1 domain in the interval 302–549 (KIAIAGKYVK…VEAALAYQER (248 aa)). Gly364 contributes to the L-glutamine binding site. Cys391 functions as the Nucleophile; for glutamine hydrolysis in the catalytic mechanism. Residues 392–395 (LGLQ), Glu415, and Arg472 each bind L-glutamine. Active-site residues include His522 and Glu524.

The protein belongs to the CTP synthase family. In terms of assembly, homotetramer.

It catalyses the reaction UTP + L-glutamine + ATP + H2O = CTP + L-glutamate + ADP + phosphate + 2 H(+). The enzyme catalyses L-glutamine + H2O = L-glutamate + NH4(+). It carries out the reaction UTP + NH4(+) + ATP = CTP + ADP + phosphate + 2 H(+). It functions in the pathway pyrimidine metabolism; CTP biosynthesis via de novo pathway; CTP from UDP: step 2/2. With respect to regulation, allosterically activated by GTP, when glutamine is the substrate; GTP has no effect on the reaction when ammonia is the substrate. The allosteric effector GTP functions by stabilizing the protein conformation that binds the tetrahedral intermediate(s) formed during glutamine hydrolysis. Inhibited by the product CTP, via allosteric rather than competitive inhibition. Functionally, catalyzes the ATP-dependent amination of UTP to CTP with either L-glutamine or ammonia as the source of nitrogen. Regulates intracellular CTP levels through interactions with the four ribonucleotide triphosphates. The sequence is that of CTP synthase from Thermus thermophilus (strain ATCC BAA-163 / DSM 7039 / HB27).